Consider the following 742-residue polypeptide: Photosystem I P700 chlorophyll a apoprotein A2 (742 aa).

8 helical membrane passes run Leu46–Ala69, Leu135–Gln158, Leu175–Ile199, Ile273–Tyr291, Leu336–Gly359, Ser375–Val401, Ala423–His445, and Phe525–Ile543. Positions 567 and 576 each coordinate [4Fe-4S] cluster. 2 consecutive transmembrane segments (helical) span residues Ala583–Trp604 and Leu651–Ile673. Divinyl chlorophyll a contacts are provided by His662, Met670, and Tyr678. Trp679 lines the phylloquinone pocket. Residues Leu715–Ala735 form a helical membrane-spanning segment.

The protein belongs to the PsaA/PsaB family. The PsaA/B heterodimer binds the P700 divinyl chlorophyll special pair and subsequent electron acceptors. PSI consists of a core antenna complex that captures photons, and an electron transfer chain that converts photonic excitation into a charge separation. The cyanobacterial PSI reaction center is composed of one copy each of PsaA,B,C,D,E,F,I,J,K,L,M and X, and forms trimeric complexes. PSI electron transfer chain: 5 divinyl chlorophyll a, 1 divinyl chlorophyll a', 2 phylloquinones and 3 4Fe-4S clusters. PSI core antenna: 90 divinyl chlorophyll a, 22 carotenoids, 3 phospholipids and 1 galactolipid. P700 is a divinyl chlorophyll a/divinyl chlorophyll a' dimer, A0 is one or more divinyl chlorophyll a, A1 is one or both phylloquinones and FX is a shared 4Fe-4S iron-sulfur center. is required as a cofactor.

The protein resides in the cellular thylakoid membrane. The enzyme catalyses reduced [plastocyanin] + hnu + oxidized [2Fe-2S]-[ferredoxin] = oxidized [plastocyanin] + reduced [2Fe-2S]-[ferredoxin]. PsaA and PsaB bind P700, the primary electron donor of photosystem I (PSI), as well as the electron acceptors A0, A1 and FX. PSI is a plastocyanin/cytochrome c6-ferredoxin oxidoreductase, converting photonic excitation into a charge separation, which transfers an electron from the donor P700 chlorophyll pair to the spectroscopically characterized acceptors A0, A1, FX, FA and FB in turn. Oxidized P700 is reduced on the lumenal side of the thylakoid membrane by plastocyanin or cytochrome c6. The protein is Photosystem I P700 chlorophyll a apoprotein A2 of Prochlorococcus marinus (strain MIT 9301).